Reading from the N-terminus, the 964-residue chain is Protein HIRA (964 aa).

WD repeat units follow at residues 10–50 (RHEG…KDNT), 64–103 (DHFGSVNCVRWAKHGRYLASGSDDQVILIHERKAGSGTSE), 123–162 (GHTADVVDLSWSPDDSTLASGSLDNTIHIWNMNNGICTAV), 165–204 (GHTSLVKGVTWDPIGSFIASQSDDKTVMIWRTSDWSLAHK), 259–331 (GHNA…PLFV), and 335–376 (FFSQ…HRLS). The tract at residues 453-490 (SHEDSKKTAGPTADDVKKGNQLSSPVKQREYRRPDGRK) is disordered. Positions 479-490 (KQREYRRPDGRK) are enriched in basic and acidic residues. Residues 644–685 (LWSDRISGKVTVLAGNANFWAVGCEDGFLQVYTRCGVRAMPA) form a WD 7 repeat. A coiled-coil region spans residues 920–940 (ASNRKVQRLLNEFMDLLLEYE).

This sequence belongs to the WD repeat HIR1 family. Interacts with RS2. In terms of tissue distribution, more abundant in apices and young leaf primordia than in fully expanded leaf tissues.

The protein localises to the nucleus. Its function is as follows. Histone chaperone involved in maintining knox genes silencing throughout leaf development. The chain is Protein HIRA from Zea mays (Maize).